Consider the following 845-residue polypeptide: Translation initiation factor IF-2 (845 aa).

Disordered stretches follow at residues 45–91 (RRKI…SNLS) and 127–209 (EESL…TPKV). A compositionally biased stretch (polar residues) spans 81 to 91 (SESSMAKSNLS). Over residues 137 to 149 (TEIHQEEQKEEKN) the composition is skewed to basic and acidic residues. Polar residues predominate over residues 151–162 (PVQTSPLSSAHS). Over residues 179-193 (TEKRKADEIKNDDRH) the composition is skewed to basic and acidic residues. A tr-type G domain is found at 343–512 (PRPPVVTIMG…LLQAELLDLK (170 aa)). The tract at residues 352 to 359 (GHVDHGKT) is G1. Residue 352 to 359 (GHVDHGKT) coordinates GTP. The segment at 377 to 381 (GITQH) is G2. The G3 stretch occupies residues 398–401 (DTPG). GTP-binding positions include 398 to 402 (DTPGH) and 452 to 455 (NKID). A G4 region spans residues 452-455 (NKID). The segment at 488 to 490 (SAK) is G5.

Belongs to the TRAFAC class translation factor GTPase superfamily. Classic translation factor GTPase family. IF-2 subfamily.

Its subcellular location is the cytoplasm. Its function is as follows. One of the essential components for the initiation of protein synthesis. Protects formylmethionyl-tRNA from spontaneous hydrolysis and promotes its binding to the 30S ribosomal subunits. Also involved in the hydrolysis of GTP during the formation of the 70S ribosomal complex. The sequence is that of Translation initiation factor IF-2 from Bartonella quintana (strain Toulouse) (Rochalimaea quintana).